Consider the following 274-residue polypeptide: Serine/threonine-protein kinase 1 (274 aa).

The Protein kinase domain occupies 17-265 (ARTALHLVNG…YEVIQKNTYW (249 aa)). Residues 23–31 (LVNGKFGKV) and Lys-46 contribute to the ATP site. Catalysis depends on Asp-133, which acts as the Proton acceptor.

It belongs to the protein kinase superfamily. Ser/Thr protein kinase family.

The catalysed reaction is L-seryl-[protein] + ATP = O-phospho-L-seryl-[protein] + ADP + H(+). The enzyme catalyses L-threonyl-[protein] + ATP = O-phospho-L-threonyl-[protein] + ADP + H(+). In terms of biological role, in vitro, can phosphorylate histone H1. The sequence is that of Serine/threonine-protein kinase 1 (PK1) from Lymantria dispar multicapsid nuclear polyhedrosis virus (LdMNPV).